The sequence spans 346 residues: Aspartate-semialdehyde dehydrogenase (346 aa).

NADP(+) contacts are provided by residues 12–15 and 40–41; these read SGAV and RS. A phosphate-binding site is contributed by arginine 101. Residue cysteine 131 is the Acyl-thioester intermediate of the active site. Glutamine 158 serves as a coordination point for substrate. 161–162 contributes to the NADP(+) binding site; the sequence is SG. Position 225 (lysine 225) interacts with phosphate. Arginine 246 contacts substrate. The Proton acceptor role is filled by histidine 253. Glutamine 326 contacts NADP(+).

This sequence belongs to the aspartate-semialdehyde dehydrogenase family. As to quaternary structure, homodimer.

The catalysed reaction is L-aspartate 4-semialdehyde + phosphate + NADP(+) = 4-phospho-L-aspartate + NADPH + H(+). The protein operates within amino-acid biosynthesis; L-lysine biosynthesis via DAP pathway; (S)-tetrahydrodipicolinate from L-aspartate: step 2/4. It participates in amino-acid biosynthesis; L-methionine biosynthesis via de novo pathway; L-homoserine from L-aspartate: step 2/3. Its pathway is amino-acid biosynthesis; L-threonine biosynthesis; L-threonine from L-aspartate: step 2/5. Functionally, catalyzes the NADPH-dependent formation of L-aspartate-semialdehyde (L-ASA) by the reductive dephosphorylation of L-aspartyl-4-phosphate. This chain is Aspartate-semialdehyde dehydrogenase, found in Helicobacter pylori (strain ATCC 700392 / 26695) (Campylobacter pylori).